The sequence spans 358 residues: MKPSILEKLQQLSDRLEEVTHLLGQPEATSDMDNYRKLTREHAELTPVVEVFQNYRLAQSDLADAEEMLSDPEMKDFAAEEIEAAKAKIGELDTELQKLLLPKDADDDKNIFIEIRAGTGGDEAALFAGDLLRMYSRYAERNRWQVEIVSANESELGGYKEVIARIVGLGAYSRLKFESGGHRVQRVPATESQGRIHTSACTVAVMPEADELEDIELNPADLRIDTFRASGAGGQHINKTDSAVRITHLPTGMVVECQDGRSQHANKAQAMKVLAARLNDAQKREAQAKEAAERKSLIGSGDRSERIRTYNYPQGRVTDHRINLTLHKLDFVMDGDLEEITNALIAEHQAELLAAMGD.

Q235 is subject to N5-methylglutamine.

Belongs to the prokaryotic/mitochondrial release factor family. Post-translationally, methylated by PrmC. Methylation increases the termination efficiency of RF1.

It localises to the cytoplasm. Peptide chain release factor 1 directs the termination of translation in response to the peptide chain termination codons UAG and UAA. The polypeptide is Peptide chain release factor 1 (Neisseria meningitidis serogroup B (strain ATCC BAA-335 / MC58)).